The chain runs to 152 residues: Isoquinoline 1-oxidoreductase subunit alpha (152 aa).

The 2Fe-2S ferredoxin-type domain maps to M1 to L77. C39, C44, and C47 together coordinate [2Fe-2S] cluster.

In terms of assembly, heterodimer of an alpha chain and a beta chain.

The catalysed reaction is isoquinoline + A + H2O = isoquinolin-1(2H)-one + AH2. Its function is as follows. Specific towards N-containing N-heterocyclic substrates, including isoquinoline, isoquinolin-5-ol, phthalazine and quinazoline. This Brevundimonas diminuta (Pseudomonas diminuta) protein is Isoquinoline 1-oxidoreductase subunit alpha (iorA).